The primary structure comprises 198 residues: 3-isopropylmalate dehydratase small subunit (198 aa).

Belongs to the LeuD family. LeuD type 1 subfamily. In terms of assembly, heterodimer of LeuC and LeuD.

It carries out the reaction (2R,3S)-3-isopropylmalate = (2S)-2-isopropylmalate. Its pathway is amino-acid biosynthesis; L-leucine biosynthesis; L-leucine from 3-methyl-2-oxobutanoate: step 2/4. Functionally, catalyzes the isomerization between 2-isopropylmalate and 3-isopropylmalate, via the formation of 2-isopropylmaleate. This is 3-isopropylmalate dehydratase small subunit from Mycobacterium avium (strain 104).